The sequence spans 341 residues: Arfaptin-2 (341 aa).

A disordered region spans residues 46–84 (NETSIVSGGYGGSGDGLIPTGSGRHPSHSTSPSGPGDEV). Positions 65-81 (TGSGRHPSHSTSPSGPG) are enriched in low complexity. S72 is subject to Phosphoserine. In terms of domain architecture, AH spans 121–321 (TVDLELELQI…NQKQLEQTLQ (201 aa)).

Forms homodimers or heterodimers with ARFIP1. Interacts with RAC1. Specifically binds to GTP-bound ARF1 and ARF6, but binds to RAC1.GTP and RAC1.GDP with similar affinities. Interacts with ARL1. Interacts (via N-terminus) with IKBKB and IKBKG; these interactions inhibit activation of NF-kappa-B.

Its subcellular location is the golgi apparatus. The protein localises to the trans-Golgi network membrane. Plays a role in constitutive metalloproteinase (MMP) secretion from the trans Golgi network. May have important functions during vesicle biogenesis at certain cargo subdomains, which could be predominantly utilized by secreted MMPs, such as MMP7 and MMP2. Also involved in autophagy by regulating the starvation-dependent trafficking of ATG9A vesicles which deliver the phosphatidylinositol 4-kinase beta (PI4KB) to the autophagosome initiation site. Involved in phagophore growth during mitophagy by regulating ATG9A trafficking to mitochondria. In addition, plays a role in NF-kappa-B inhibition by interacting with IKBKB and IKBKG. The polypeptide is Arfaptin-2 (Mus musculus (Mouse)).